A 143-amino-acid polypeptide reads, in one-letter code: Interleukin-3 (143 aa).

A signal peptide spans 1–19 (MSRLPVLLLLHLLVSPGLQ). Cysteine 35 and cysteine 103 are disulfide-bonded. Asparagine 89 carries an N-linked (GlcNAc...) asparagine glycan.

It belongs to the IL-3 family. As to quaternary structure, monomer. In terms of tissue distribution, activated T-cells, mast cells, natural killer cells.

Its subcellular location is the secreted. In terms of biological role, granulocyte/macrophage colony-stimulating factors are cytokines that act in hematopoiesis by controlling the production, differentiation, and function of 2 related white cell populations of the blood, the granulocytes and the monocytes-macrophages. This CSF induces granulocytes, macrophages, mast cells, stem cells, erythroid cells, eosinophils and megakaryocytes. In Macaca mulatta (Rhesus macaque), this protein is Interleukin-3 (IL3).